The following is a 494-amino-acid chain: MFS-type transporter lnaF (494 aa).

The segment at 1–51 is disordered; that stretch reads MTYDPENAMGEARADAPVEAEKEHEATQTTVKESTLGYDNSSDPSRRDSYR. A compositionally biased stretch (basic and acidic residues) spans 12–26; that stretch reads ARADAPVEAEKEHEA. N-linked (GlcNAc...) asparagine glycosylation is found at Asn40, Asn58, and Asn68. 10 helical membrane passes run 105–125, 128–148, 156–176, 203–223, 228–248, 290–310, 323–343, 354–374, 383–403, and 446–466; these read SLLI…DMFS, AGLL…TLAL, MLWY…GEYP, TLMA…CLIA, LPVT…IIMV, LAFF…STII, AIWQ…GAWL, ILGF…FPHL, VLYG…IGLI, and STFY…WFLP.

This sequence belongs to the major facilitator superfamily. Sugar transporter (TC 2.A.1.1) family.

It is found in the cell membrane. MFS-type transporter; part of the lna gene cluster that mediates the biosynthesis of diastereomeric piperazines. Lna and lnb clusters encode sets of enzymes that produce overlapping sets of previously undescribed metabolites such as piperazinomycin-like metabolites or morpholine. The lna and lnb biosynthetic pathways appear to be part of a signaling network that controls the formation of sclerotia, a resilient overwintering structure. May be involved in the secretion of the metabolites produced by the lna and lnb clusters. The polypeptide is MFS-type transporter lnaF (Aspergillus flavus (strain ATCC 200026 / FGSC A1120 / IAM 13836 / NRRL 3357 / JCM 12722 / SRRC 167)).